We begin with the raw amino-acid sequence, 158 residues long: Cysteine proteinase inhibitor 4 (158 aa).

The first 24 residues, 1-24, serve as a signal peptide directing secretion; it reads MAARCPVGVASVLLLIVLVTVASA. The interval 26-51 is disordered; the sequence is SGARSGGGGGGGIRELRGGGAGRRVG. Residues 29 to 49 are compositionally biased toward gly residues; it reads RSGGGGGGGIRELRGGGAGRR. Residues 51 to 116 form the Cystatin domain; it reads GGRTEVRDVE…KYYLRVAAAE (66 aa). The Secondary area of contact signature appears at 101–105; it reads QVVSG.

Belongs to the cystatin family. Phytocystatin subfamily.

The protein localises to the secreted. Specific inhibitor of cysteine proteinases. Probably involved in the regulation of endogenous processes and in defense against pests and pathogens. The protein is Cysteine proteinase inhibitor 4 of Oryza sativa subsp. japonica (Rice).